Here is a 348-residue protein sequence, read N- to C-terminus: Mitogen-activated protein kinase kinase 5 (348 aa).

Disordered regions lie at residues 1–26 (MKPI…DLSL) and 35–54 (LAVP…PASS). Serine 6 bears the Phosphoserine; by ASK7 mark. Residues 70-325 (LERVNRIGSG…AQQLLQHPFI (256 aa)) enclose the Protein kinase domain. ATP-binding positions include 76–84 (IGSGAGGTV) and lysine 99. Aspartate 187 serves as the catalytic Proton acceptor. Threonine 215 is subject to Phosphothreonine. Serine 221 bears the Phosphoserine; by ASK7 mark. At serine 221 the chain carries Phosphoserine. Phosphothreonine; by ASK7 is present on threonine 225. At arginine 313 the chain carries ADP-ribosylarginine; by HopF2.

The protein belongs to the protein kinase superfamily. STE Ser/Thr protein kinase family. MAP kinase kinase subfamily. As to quaternary structure, interacts with P.syringae type III effector HopF2. Interacts with BZR1. Interacts with MPK6 and MPK3. Interacts with RACK1A, RACK1B and RACK1C. Interacts with MAPKKK5 mainly in the cytosol. Binds to BASL. Interacts with MAPKKK20. In terms of processing, phosphorylation at Thr-215 and Ser-221 by MAP kinase kinase kinases positively regulates kinase activity. Phosphorylated by MAPKKK5 and MAPKKK20 in response to abscisic acid (ABA). Post-translationally, ADP-ribosylation at Arg-313 by P.syringae type III effector HopF2 reduces the ability of the protein to phosphorylate downstream MPK6. In terms of tissue distribution, expressed higher in stems and leaves than in flowers and roots.

The catalysed reaction is L-seryl-[protein] + ATP = O-phospho-L-seryl-[protein] + ADP + H(+). The enzyme catalyses L-threonyl-[protein] + ATP = O-phospho-L-threonyl-[protein] + ADP + H(+). It catalyses the reaction L-tyrosyl-[protein] + ATP = O-phospho-L-tyrosyl-[protein] + ADP + H(+). Activated through serine and threonine phosphorylation by MEKK1 and MAPKKK20 in response to abscisic acid (ABA). Inhibited through phosphorylation by GSK3/Shaggy-like kinase ASKs. Inhibited through ADP-Ribosylation by P.syringae HopF2. Activated after high light stress. In terms of biological role, mitogen-activated protein kinase kinase (MAPKK) which regulates abscisic acid (ABA) responses in a MAPKKK20-MKK5-MPK6 cascade involved in root growth (e.g. root cell division and elongation) and stomatal response, probably via MAPK6 activation by protein phosphorylation. Involved in the second phase of hydrogen peroxide generation during hypersensitive response-like cell death. Involved in the innate immune MAP kinase signaling cascade (MEKK1, MKK4/MKK5 and MPK3/MPK6) downstream of bacterial flagellin receptor FLS2. Activates by phosphorylation the downstream MPK3 and MPK6. YDA-MKK4/MKK5-MPK3/MPK6 module regulates stomatal cell fate before the guard mother cell (GMC) is specified. This MAPK cascade also functions downstream of the ER receptor in regulating coordinated local cell proliferation, which shapes the morphology of plant organs. MKK4 and MKK5 participate in the regulation of floral organ abscission. Target of the Pseudomonas syringae type III effector HopF2, that inhibits the activation of the downstream MPK6 and PAMP-triggered immunity. Plays a critical role in high light stress tolerance by the mediation of the Cu/Zn SODs CSD1 and CSD2 gene expression. Phosphorylates BZR1 in vitro. The sequence is that of Mitogen-activated protein kinase kinase 5 from Arabidopsis thaliana (Mouse-ear cress).